We begin with the raw amino-acid sequence, 927 residues long: Phosphoenolpyruvate carboxylase (927 aa).

Active-site residues include histidine 160 and lysine 589.

The protein belongs to the PEPCase type 1 family. Requires Mg(2+) as cofactor.

The catalysed reaction is oxaloacetate + phosphate = phosphoenolpyruvate + hydrogencarbonate. Functionally, forms oxaloacetate, a four-carbon dicarboxylic acid source for the tricarboxylic acid cycle. In Rhodopseudomonas palustris (strain BisA53), this protein is Phosphoenolpyruvate carboxylase.